A 265-amino-acid chain; its full sequence is Pancreas transcription factor 1 subunit alpha (265 aa).

Positions 115 to 167 (QLRQAANVRERRRMQSINDAFEGLRSHIPTLPYEKRLSKVDTLRLAIGYINFL) constitute a bHLH domain.

It localises to the nucleus. Functionally, transcription factor implicated in the cell fate determination in various organs. Binds to the E-box consensus sequence 5'-CANNTG-3'. Required for exocrine pancreatic development. Plays a central role in directing the differentiation of retinal progenitors towards horizontal and amacrine fates. This chain is Pancreas transcription factor 1 subunit alpha (ptf1a), found in Danio rerio (Zebrafish).